Reading from the N-terminus, the 145-residue chain is uncharacterized protein (145 aa).

Positions 1-49 (MLSIFKNLLGTSEEDGTTQEANSKDTKGLKEERKRKKRKNKYKIPPGHT) are disordered. The span at 22-32 (NSKDTKGLKEE) shows a compositional bias: basic and acidic residues. Residues 33–42 (RKRKKRKNKY) show a composition bias toward basic residues. Residue Ser68 is modified to Phosphoserine. A Cytochrome b5 heme-binding domain is found at 69-145 (PISVTAEELA…LKTSFVGYLV (77 aa)). Heme is bound by residues His104 and His127.

Belongs to the cytochrome b5 family.

Its subcellular location is the cytoplasm. This is an uncharacterized protein from Schizosaccharomyces pombe (strain 972 / ATCC 24843) (Fission yeast).